The following is a 97-amino-acid chain: Protein ParC (97 aa).

The polypeptide is Protein ParC (parC) (Escherichia coli).